Here is a 665-residue protein sequence, read N- to C-terminus: Pentatricopeptide repeat-containing protein At1g04840 (665 aa).

PPR repeat units lie at residues 90 to 124 (NPFV…GVKP), 125 to 155 (DRLT…TLKN), 160 to 190 (DSFV…SPDR), 195 to 229 (SILI…NSGS), 230 to 256 (WSTL…MPEK), 257 to 291 (NVVS…GLKP), 292 to 326 (NEYT…GIKL), 327 to 357 (DRAI…MNHK), 358 to 392 (DILS…GEKP), 393 to 423 (DEVV…MRLD), and 429 to 459 (TLKH…MPIN). The interval 464–539 (TWAALYRACK…SLGWSYIELD (76 aa)) is type E motif. Residues 540 to 570 (GQLNKFSAGDYSHKLTQEIGLKLDEIISLAI) are type E(+) motif. Residues 571–665 (QKGYNPGADW…DGRCSCGDYW (95 aa)) form a type DYW motif region.

The protein belongs to the PPR family. PCMP-H subfamily.

The polypeptide is Pentatricopeptide repeat-containing protein At1g04840 (PCMP-H64) (Arabidopsis thaliana (Mouse-ear cress)).